The sequence spans 427 residues: 3-phosphoshikimate 1-carboxyvinyltransferase (427 aa).

3-phosphoshikimate is bound by residues Lys-20, Ser-21, and Arg-25. Lys-20 lines the phosphoenolpyruvate pocket. The phosphoenolpyruvate site is built by Gly-92 and Arg-120. 3-phosphoshikimate contacts are provided by Ser-166, Gln-168, Asp-312, and Lys-339. Gln-168 provides a ligand contact to phosphoenolpyruvate. Asp-312 functions as the Proton acceptor in the catalytic mechanism. Positions 343 and 385 each coordinate phosphoenolpyruvate.

Belongs to the EPSP synthase family. Monomer.

The protein resides in the cytoplasm. The catalysed reaction is 3-phosphoshikimate + phosphoenolpyruvate = 5-O-(1-carboxyvinyl)-3-phosphoshikimate + phosphate. It functions in the pathway metabolic intermediate biosynthesis; chorismate biosynthesis; chorismate from D-erythrose 4-phosphate and phosphoenolpyruvate: step 6/7. Catalyzes the transfer of the enolpyruvyl moiety of phosphoenolpyruvate (PEP) to the 5-hydroxyl of shikimate-3-phosphate (S3P) to produce enolpyruvyl shikimate-3-phosphate and inorganic phosphate. In Streptococcus pneumoniae (strain Hungary19A-6), this protein is 3-phosphoshikimate 1-carboxyvinyltransferase.